A 1000-amino-acid polypeptide reads, in one-letter code: MPDRGGGPPTGPRIRVGRPSRRVRTLLLTLGVLAVLAMAFTMFAGFWTDWLWYRSVHYSSVFTTTLWTKIGLFFVFGLLMALAVGFNIWLAHRLRPPLSAMSMEQQNLDRYRMGIAPYKKWLLLGITALVGLIAGASASGQWRTWLMWVNGVPFGQKDPQFKLDVSFYAFDLPWYRFLLGFGFAAVIISVIAAALTHYLYGGLRVTSPGARATAAATGHLSVLLGVFVALKAVAYWLDRYGLAVKSSDFKATDNWTGLRYVDANAYLPAKTILFCIAVICALLFFATLWRRTWQLPVIGFGLMVLSAILIGGLYPALVQKFQVQPNEQAKEAPYVEKNLAATRDAYGIEGTQVAEYPGKSETKDKTKLRDDADAAASVRIMDPNIISPTFQQLQQMRNYYAFPTNLDVDRYAKDGKDQDTVIGLRELNLAGIPKKNWINNHFRYTHGYGVVAAKGTQVDSEGRPVFTESNLPSEGDLGKYEQRIYYGEKTTTYSIVGGPQKEIDYSDDTGEKTFSYKGDGGVDLSNPINRAAYAAAFSEPQILYSGAIGDGSRILYNRTPKERVEAVAPWLTIDGDAYPAVVDGRIQWIVDAYTTTNGYPYASRTTLGDTTADSLTANNNSRAVVAQQNQVNYIRNSVKATVDAYSGDVKLYEWDTQDPVLKTWKKAFPGTVQDKGEISKELMAHLRYPQDLFKVQRELLTRYHVKDANTFLSGSEVWQVPDDPTNKSGDAVPPYYLSMKMPDQKAQAFSLTTTFTPNGRDNLSAFMAVDAEAGTSDYGKIRILKLPTSTTVDGPKQVQSQFNSEQDIAESIRLLRGGDSEVEYGNLLTVPLDGGLLYVEPVYVRGGDLKYPLLRKVLVSYGGNTAFENTLDAALNKVFGAQAAETEQPPDEGDDTTEPPPTSTNPTVREALSDAQKAFDAGQKALEQKDLAAYAEAQKDLEEALQRAEDAQAKADQGAGGKNGDDKNAGDKNSGDKAGSDKAGPDATPTGDAGGGADTG.

A run of 7 helical transmembrane segments spans residues 26 to 48 (LLLTLGVLAVLAMAFTMFAGFWT), 70 to 92 (IGLFFVFGLLMALAVGFNIWLAH), 121 to 143 (WLLLGITALVGLIAGASASGQWR), 177 to 199 (FLLGFGFAAVIISVIAAALTHYL), 220 to 237 (LSVLLGVFVALKAVAYWL), 267 to 289 (LPAKTILFCIAVICALLFFATLW), and 296 to 318 (PVIGFGLMVLSAILIGGLYPALV). Disordered stretches follow at residues 884 to 908 (AETEQPPDEGDDTTEPPPTSTNPTV) and 943 to 1000 (EALQ…ADTG). Over residues 888 to 897 (QPPDEGDDTT) the composition is skewed to acidic residues. Composition is skewed to basic and acidic residues over residues 943–953 (EALQRAEDAQA) and 963–984 (NGDDKNAGDKNSGDKAGSDKAG).

Belongs to the UPF0182 family.

It is found in the cell membrane. This Streptomyces coelicolor (strain ATCC BAA-471 / A3(2) / M145) protein is UPF0182 protein SCO5204.